The chain runs to 560 residues: Alpha-keto-acid decarboxylase (560 aa).

Glutamate 61 provides a ligand contact to thiamine diphosphate. The thiamine pyrophosphate binding stretch occupies residues 396–478; the sequence is TSFYGMADHR…VVVNNDGYTV (83 aa). Mg(2+) is bound by residues aspartate 446, asparagine 473, and glycine 475.

It belongs to the TPP enzyme family. A metal cation serves as cofactor. Thiamine diphosphate is required as a cofactor.

Functionally, decarboxylates branched-chain and aromatic alpha-keto acids to aldehydes. This chain is Alpha-keto-acid decarboxylase (kdc), found in Mycobacterium tuberculosis (strain CDC 1551 / Oshkosh).